We begin with the raw amino-acid sequence, 534 residues long: MKSNVDTVLDGYTSVPVGVLDSTLANTDILTRITLVFPSSLSLSALQESWYALVRSWPILAARVRATPSTPSGLSYLIPTPATLESLETRSRNSASKPLEKHIVLLDQSSRSFSDYHPIVAKAVHSNLDRNNISIGGAPLVEHEKATICSNACTSWKQLIKQDQAFVTAQATKFADATTVTISFSHILGDAFTIKHIFQGWQTALNGQAVQELQDVGKDPFIKYLPKDTNDKKHKKNKKSEPAPDLPLQWFRYGLARKIKLISLLLWEVKVKKPEKTLGQYYIYLPQAKVDELMAQARSDLEQLRSSSATSATERDLNVSTFNVLFAWLLQNIHASTAIKPSKTSSVICIINAKTRPPAGHVPADYPRHQLWGGALGAPLRPLSAAEYVTLPLGQLALHIRESITEQVDPENIRKSVVMALKHSMWKKPSGELLFFSQNPNTYWCGCTEWRSAKFHTIDFSAAATPHHDAIQPTAAPAASVNPVAITTNMETPMTKRNRWALLGEANNGIWFTGGLTANEASNKNGFGRYIFVE.

Active-site proton acceptor residues include His186 and Asp459.

It belongs to the plant acyltransferase family.

It localises to the cell membrane. It functions in the pathway secondary metabolite biosynthesis. In terms of biological role, acetyltransferase; part of the gene cluster that mediates the biosynthesis of mannosylerythritol lipids (MELs), surface-active substances that enhance the availability of water-insoluble substrates. Mannosylerythritol lipid production is responsible for hemolytic activity of Ustilago maydis. Depending on the number of acetyl groups, mannosylerythritol lipids can be differentiated into MEL A (fully acetylated), MEL B and MEL C (monoacetylated at R-6 and R-4, respectively), and the fully deacetylated MEL D. The first step in the pathway is the generation of mannosylerythritol by the glycosyltransferase EMT1 which catalyzes the transfer of GDP-mannose to the C-4 atom of meso-erythritol. This reaction has to be stereospecific, since only mannosyl-D-erythritol is generated. The produced disaccharide is subsequently acylated with fatty acids of various lengths derived from the peroxisomal beta-oxidation by the peroxisomal acyltransferases MAC1 and MAC2 at positions C-2 and C-3, repectively. The existence of MEL derivatives which carry an acetyl group at C-2 implies that at least MAC1 also accepts acetyl-CoA as a donor. The final step of MEL biosynthesis is the acetylation of the fully acylated mannosylerythritol lipids catalyzed by the acetyl-CoA-dependent acetyltransferase MAT1. MAT1 displays a relaxed regioselectivity and is able to transfer acetylgroups to both positions C-4 and C-6 of the mannosyl moiety. This Mycosarcoma maydis (Corn smut fungus) protein is Acetyltransferase MATC1.